The following is a 670-amino-acid chain: NAD-dependent histone deacetylase SIR2 (670 aa).

Disordered stretches follow at residues 1-157 (MTEY…EHPI) and 235-263 (DNDD…PSPS). Residues 45-68 (NEDVDVDADADVDADADADADAEE) are compositionally biased toward acidic residues. Over residues 69–81 (DAQKDILEETKAD) the composition is skewed to basic and acidic residues. Over residues 82–92 (ELDEVVDEYEE) the composition is skewed to acidic residues. Residues 96–119 (SSNFNGTASDHVGITSSNTGSTAL) are compositionally biased toward polar residues. The span at 120–142 (AASSADTNSGSGNGTGTMATNGT) shows a compositional bias: low complexity. Over residues 239–261 (SLPQKNSSETKNVSDTYTATYPS) the composition is skewed to polar residues. In terms of domain architecture, Deacetylase sirtuin-type spans 293–583 (RLTNFHTIDD…ALVAQKCGWD (291 aa)). NAD(+) contacts are provided by residues 318-337 (GAGI…EGFY) and 400-403 (QNID). His-420 (proton acceptor) is an active-site residue. Zn(2+) is bound by residues Cys-428, Cys-431, Cys-452, and Cys-455. Residues 527 to 529 (GTS), 552 to 554 (NKD), and Cys-569 each bind NAD(+). Residues 617–670 (AELEAEEEKHLPLQQSTAALTPPVSLSADSPGRSSSSSPQPPTQTDIANNQTST) are disordered. Residues 641 to 654 (SLSADSPGRSSSSS) show a composition bias toward low complexity. The segment covering 659 to 670 (TQTDIANNQTST) has biased composition (polar residues).

It belongs to the sirtuin family. Class I subfamily. It depends on Zn(2+) as a cofactor.

It localises to the nucleus. The catalysed reaction is N(6)-acetyl-L-lysyl-[protein] + NAD(+) + H2O = 2''-O-acetyl-ADP-D-ribose + nicotinamide + L-lysyl-[protein]. Its function is as follows. NAD-dependent deacetylase, which asts as a key regulator of gene expression believed to help form modified chromatin structures on the genes it regulates. It is involved in telomeric silencing and in hm mating type loci silencing. The sequence is that of NAD-dependent histone deacetylase SIR2 (SIR2) from Kluyveromyces lactis (strain ATCC 8585 / CBS 2359 / DSM 70799 / NBRC 1267 / NRRL Y-1140 / WM37) (Yeast).